Reading from the N-terminus, the 382-residue chain is Dual-specificity RNA methyltransferase RlmN (382 aa).

E94 (proton acceptor) is an active-site residue. The Radical SAM core domain maps to 100–336; the sequence is EANRGTLCVS…NTITRKTRGD (237 aa). C107 and C342 form a disulfide bridge. The [4Fe-4S] cluster site is built by C114, C118, and C121. Residues 168 to 169, S200, 222 to 224, and N299 contribute to the S-adenosyl-L-methionine site; these read GE and SLH. C342 serves as the catalytic S-methylcysteine intermediate.

Belongs to the radical SAM superfamily. RlmN family. [4Fe-4S] cluster is required as a cofactor.

It localises to the cytoplasm. It carries out the reaction adenosine(2503) in 23S rRNA + 2 reduced [2Fe-2S]-[ferredoxin] + 2 S-adenosyl-L-methionine = 2-methyladenosine(2503) in 23S rRNA + 5'-deoxyadenosine + L-methionine + 2 oxidized [2Fe-2S]-[ferredoxin] + S-adenosyl-L-homocysteine. It catalyses the reaction adenosine(37) in tRNA + 2 reduced [2Fe-2S]-[ferredoxin] + 2 S-adenosyl-L-methionine = 2-methyladenosine(37) in tRNA + 5'-deoxyadenosine + L-methionine + 2 oxidized [2Fe-2S]-[ferredoxin] + S-adenosyl-L-homocysteine. In terms of biological role, specifically methylates position 2 of adenine 2503 in 23S rRNA and position 2 of adenine 37 in tRNAs. m2A2503 modification seems to play a crucial role in the proofreading step occurring at the peptidyl transferase center and thus would serve to optimize ribosomal fidelity. This is Dual-specificity RNA methyltransferase RlmN from Legionella pneumophila (strain Paris).